Here is a 153-residue protein sequence, read N- to C-terminus: HTH-type transcriptional regulator Zrp (153 aa).

Positions 2–63 (IDYRDRHILS…LLDRKKINLP (62 aa)) constitute an HTH asnC-type domain. The segment at residues 21–40 (LAEIAERVALSVSACSRRVA) is a DNA-binding region (H-T-H motif).

This is HTH-type transcriptional regulator Zrp (zrp) from Zymomonas mobilis subsp. mobilis (strain ATCC 10988 / DSM 424 / LMG 404 / NCIMB 8938 / NRRL B-806 / ZM1).